A 424-amino-acid chain; its full sequence is Phosphoribosylamine--glycine ligase (424 aa).

Positions 111–312 constitute an ATP-grasp domain; sequence KAFVKECGIK…LLDLCLATAK (202 aa). 137–189 contacts ATP; sequence IQNASFPLVIKALNKNTSIVYQEEEAIKILEDAFKQSNEPVIIEPFLEGFELS.

It belongs to the GARS family.

The catalysed reaction is 5-phospho-beta-D-ribosylamine + glycine + ATP = N(1)-(5-phospho-beta-D-ribosyl)glycinamide + ADP + phosphate + H(+). The protein operates within purine metabolism; IMP biosynthesis via de novo pathway; N(1)-(5-phospho-D-ribosyl)glycinamide from 5-phospho-alpha-D-ribose 1-diphosphate: step 2/2. The protein is Phosphoribosylamine--glycine ligase (purD) of Helicobacter pylori (strain ATCC 700392 / 26695) (Campylobacter pylori).